The following is a 132-amino-acid chain: tRNA (cytidine(56)-2'-O)-methyltransferase (132 aa).

Residues L35, G65–V69, and I83–E90 each bind S-adenosyl-L-methionine.

This sequence belongs to the aTrm56 family. In terms of assembly, homodimer.

Its subcellular location is the cytoplasm. It carries out the reaction cytidine(56) in tRNA + S-adenosyl-L-methionine = 2'-O-methylcytidine(56) in tRNA + S-adenosyl-L-homocysteine + H(+). Its function is as follows. Specifically catalyzes the AdoMet-dependent 2'-O-ribose methylation of cytidine at position 56 in tRNAs. This chain is tRNA (cytidine(56)-2'-O)-methyltransferase, found in Sulfolobus acidocaldarius (strain ATCC 33909 / DSM 639 / JCM 8929 / NBRC 15157 / NCIMB 11770).